A 591-amino-acid chain; its full sequence is MVVKDNLRTPIVCVMGHVDHGKTSLLDMIRGSAVVSGEAGAITQHIGATEVPISAIVEKCGNPGLLDKFMVPGLLFIDTPGHHAFTTLRSRGGALADLAVVIVDINEGFKPQTIESLNILQQHKTPFVVVANKIDKIHGWNPQKGAPFMTSYNKQSEHVRGSLDTKFYEVVGELYNHGFSSDRYDRVNDFQHNIGVIPISAITGEGIPDLLMVLLGLAQRFLESNLHYNAEGPGVGTVLEVKEERGLGTTLDLILYDGVLKKGDTIVVGCLGEPIQTKVRAVLKPRALSEINVEDKFKQVSKVTAAVGVKISAPHLDGALSGGSVRVATAETLDAVVEEVRNEIEDVQIDTDQSGITIKADTIGSLEALVNELKKEDIPIRKANVGDISNRDIMEAFAIEDPFHSVIVGFNVNILPDAKEKVRSTGVKVFMNDVIYRLIDDYRDWVKEQRAISEKAVSETIVKPAMFTIMPDCVFRQSKPAVVGVRVIGGTIKTKVDVATGDGTVVGIVKGLQSRGENVSVATIGMEVAMSIEGPTVGRQINEGDILHANIPERHVKILEQELYDSLSADELEALDSFLDIKRRDNPFWAK.

A tr-type G domain is found at 7–223 (LRTPIVCVMG…LLGLAQRFLE (217 aa)). The segment at 16 to 23 (GHVDHGKT) is G1. Residue 16-23 (GHVDHGKT) coordinates GTP. The segment at 41 to 45 (AITQH) is G2. Positions 78–81 (DTPG) are G3. GTP is bound by residues 78–82 (DTPGH) and 132–135 (NKID). The segment at 132–135 (NKID) is G4. Positions 200–202 (SAI) are G5.

The protein belongs to the TRAFAC class translation factor GTPase superfamily. Classic translation factor GTPase family. IF-2 subfamily.

Its function is as follows. Function in general translation initiation by promoting the binding of the formylmethionine-tRNA to ribosomes. Seems to function along with eIF-2. This is Probable translation initiation factor IF-2 from Methanococcoides burtonii (strain DSM 6242 / NBRC 107633 / OCM 468 / ACE-M).